We begin with the raw amino-acid sequence, 482 residues long: Arginine/ornithine antiporter (482 aa).

Topologically, residues 1 to 10 (MSQESSQKLR) are cytoplasmic. A helical membrane pass occupies residues 11-31 (LGALTALVVGSMIGGGIFSLP). The Periplasmic portion of the chain corresponds to 32–40 (QNMAASADV). A helical transmembrane segment spans residues 41–61 (GAVLIGWAITAVGMLTLAFVF). Residues 62-100 (QTLANRKPELDGGVYAYAKAGFGDYMGFSSAWGYWISAW) lie on the Cytoplasmic side of the membrane. A helical transmembrane segment spans residues 101 to 121 (LGNVGYFVLLFSTLGYFFPIF). At 122–124 (GKG) the chain is on the periplasmic side. Residues 125-145 (DTVAAIVCASVLLWALHFLVL) traverse the membrane as a helical segment. Topologically, residues 146–156 (RGIKEAAFINT) are cytoplasmic. Residues 157 to 177 (VTTVAKVVPLFLFILICLFAF) form a helical membrane-spanning segment. The Periplasmic portion of the chain corresponds to 178 to 202 (KLDIFTADIWGKSNPDLGSVMNQVR). The chain crosses the membrane as a helical span at residues 203-223 (NMMLVTVWVFIGIEGASIFSS). At 224–235 (RAEKRSDVGKAT) the chain is on the cytoplasmic side. Residues 236-256 (VIGFITVLLLLVLVNVLSMGV) form a helical membrane-spanning segment. Over 257–283 (MTQPELAKLQNPSMALVLEHVVGHWGA) the chain is Periplasmic. Residues 284-304 (VLISVGLLISLLGALLSWVLL) form a helical membrane-spanning segment. Residues 305–333 (CAEIMFAAAKDHTMPEFLRRENANQVPAN) are Cytoplasmic-facing. A helical transmembrane segment spans residues 334-354 (ALWLTNICVQVFLVVVFFTSG). Residues 355 to 365 (DPDGMDPYTKM) lie on the Periplasmic side of the membrane. The chain crosses the membrane as a helical span at residues 366 to 386 (LLLATSMILIPYFWSAAYGLL). Residues 387 to 403 (LTLKGETYENDARERSK) lie on the Cytoplasmic side of the membrane. Residues 404-424 (DLVIAGIAVAYAVWLLYAGGL) traverse the membrane as a helical segment. Residue Lys-425 is a topological domain, periplasmic. The helical transmembrane segment at 426–446 (YLLLSALLYAPGAILFAKAKH) threads the bilayer. Over 447 to 458 (EVGQPIFTGIEK) the chain is Cytoplasmic. The chain crosses the membrane as a helical span at residues 459–479 (LIFAAVVIGALVAAYGLYDGF). At 480–482 (LTL) the chain is on the periplasmic side.

This sequence belongs to the amino acid-polyamine-organocation (APC) superfamily. Basic amino acid/polyamine antiporter (APA) (TC 2.A.3.2) family.

Its subcellular location is the cell inner membrane. It catalyses the reaction L-ornithine(in) + L-arginine(out) = L-ornithine(out) + L-arginine(in). In terms of biological role, catalyzes electroneutral exchange between arginine and ornithine to allow high-efficiency energy conversion in the arginine deiminase pathway. Also mediates the proton motive force-driven uptake of arginine and ornithine, but the exchange is several orders of magnitude faster than the proton motive force-driven transport. The chain is Arginine/ornithine antiporter from Pseudomonas aeruginosa (strain ATCC 15692 / DSM 22644 / CIP 104116 / JCM 14847 / LMG 12228 / 1C / PRS 101 / PAO1).